Here is a 158-residue protein sequence, read N- to C-terminus: ATP synthase subunit delta, mitochondrial (158 aa).

The N-terminal 22 residues, 1-22, are a transit peptide targeting the mitochondrion; it reads MFRLTSARALFRVANVAARRTY.

Belongs to the ATPase epsilon chain family. F-type ATPases have 2 components, CF(1) - the catalytic core - and CF(0) - the membrane proton channel. CF(1) has five subunits: alpha(3), beta(3), gamma(1), delta(1), epsilon(1). CF(0) has three main subunits: a, b and c.

The protein localises to the mitochondrion. It localises to the mitochondrion inner membrane. In terms of biological role, mitochondrial membrane ATP synthase (F(1)F(0) ATP synthase or Complex V) produces ATP from ADP in the presence of a proton gradient across the membrane which is generated by electron transport complexes of the respiratory chain. F-type ATPases consist of two structural domains, F(1) - containing the extramembraneous catalytic core, and F(0) - containing the membrane proton channel, linked together by a central stalk and a peripheral stalk. During catalysis, ATP turnover in the catalytic domain of F(1) is coupled via a rotary mechanism of the central stalk subunits to proton translocation. Part of the complex F(1) domain and of the central stalk which is part of the complex rotary element. Rotation of the central stalk against the surrounding alpha(3)beta(3) subunits leads to hydrolysis of ATP in three separate catalytic sites on the beta subunits. The protein is ATP synthase subunit delta, mitochondrial (ATP16) of Eremothecium gossypii (strain ATCC 10895 / CBS 109.51 / FGSC 9923 / NRRL Y-1056) (Yeast).